Reading from the N-terminus, the 423-residue chain is MEQTASPVVFAARDDASDVHFPHDDGSRVPYKVFSSRAVYDREQERIFRGPTWNFVALEAEIPNAGDFKSTFVGDTPVVVTRTEDGALSAWVNRCAHRGAQVCRKSRGNASSHTCVYHQWSFDNEGNLLGVPFRRGQKGMTGMPADFDPKQHGLRKLRVDSYRGLVFATFSDDVAPLPDYLGAQMRPWIDRIFHKPIEYLGCTRQYSKSNWKLYMENVKDPYHASMLHLFHTTFNIFRVGMKARSIPDANHGLHSIITVTKTGDDTSAAYKQQNIRSFDEGFHLEDESILDLVSEYDEDCTNHIQPIFPQLVIQQIHNTLVARQILPKGPDNFELIFHFFGYADDTPELRALRIKQANLVGPAGYISMEDTEATELVQRGTVRDADATSVIEMSRGNPEQQDTVITESLIRKFWVGYQKLMGY.

Residues 53–168 (WNFVALEAEI…VDSYRGLVFA (116 aa)) enclose the Rieske domain. [2Fe-2S] cluster is bound by residues Cys95, His97, Cys115, and His118. Fe cation contacts are provided by His223, His228, and Asp370.

Belongs to the bacterial ring-hydroxylating dioxygenase alpha subunit family. In terms of assembly, part of a multicomponent enzyme system composed of a reductase (AndAa), a ferredoxin (AndAb) and a two-subunit oxygenase component (AndAc and AndAd). Fe cation is required as a cofactor. Requires [2Fe-2S] cluster as cofactor.

It carries out the reaction anthranilate + NADH + O2 + 3 H(+) = catechol + NH4(+) + CO2 + NAD(+). The enzyme catalyses anthranilate + NADPH + O2 + 3 H(+) = catechol + NH4(+) + CO2 + NADP(+). Its pathway is aromatic compound metabolism; anthranilate degradation via hydroxylation; catechol from anthranilate: step 1/1. Its function is as follows. Oxygenase component of anthranilate dioxygenase multicomponent enzyme system which catalyzes the incorporation of both atoms of molecular oxygen into anthranilate to form catechol. Can also act on benzoate and salicylate but not on 2-chlorobenzoate or o-toluate. This is Anthranilate 1,2-dioxygenase large subunit from Burkholderia cepacia (Pseudomonas cepacia).